An 88-amino-acid chain; its full sequence is MKSVIAVLVLSLVLVNFTQAAKDDRWKACRMKCYTESKLCMNNDSKCFDSQSCNSCIQQVYSPCFNRCQEMLRRREAFKRMFAFDEEN.

Positions Met1 to Ala20 are cleaved as a signal peptide. 4 disulfides stabilise this stretch: Cys29/Cys68, Cys33/Cys64, Cys40/Cys56, and Cys47/Cys53.

As to expression, is expressed in the ectodermal cells of gastrulae and planulae. Is also noticeable in the endoderm in late planulae. In the primary polyps, is expressed in both ectoderm (sensory neurons) and endoderm (ganglions). Is not expressed in nematocytes.

Probable neuropeptide. The protein is Protein Aeq5-like1 of Nematostella vectensis (Starlet sea anemone).